The primary structure comprises 152 residues: 6,7-dimethyl-8-ribityllumazine synthase (152 aa).

5-amino-6-(D-ribitylamino)uracil is bound by residues phenylalanine 21, 55-57 (AFE), and 79-81 (AVI). 84 to 85 (AT) is a binding site for (2S)-2-hydroxy-3-oxobutyl phosphate. The Proton donor role is filled by histidine 87. Residue phenylalanine 112 coordinates 5-amino-6-(D-ribitylamino)uracil. Residue arginine 126 coordinates (2S)-2-hydroxy-3-oxobutyl phosphate.

It belongs to the DMRL synthase family. Forms an icosahedral capsid composed of 60 subunits, arranged as a dodecamer of pentamers.

It catalyses the reaction (2S)-2-hydroxy-3-oxobutyl phosphate + 5-amino-6-(D-ribitylamino)uracil = 6,7-dimethyl-8-(1-D-ribityl)lumazine + phosphate + 2 H2O + H(+). It participates in cofactor biosynthesis; riboflavin biosynthesis; riboflavin from 2-hydroxy-3-oxobutyl phosphate and 5-amino-6-(D-ribitylamino)uracil: step 1/2. Catalyzes the formation of 6,7-dimethyl-8-ribityllumazine by condensation of 5-amino-6-(D-ribitylamino)uracil with 3,4-dihydroxy-2-butanone 4-phosphate. This is the penultimate step in the biosynthesis of riboflavin. The sequence is that of 6,7-dimethyl-8-ribityllumazine synthase from Exiguobacterium sibiricum (strain DSM 17290 / CCUG 55495 / CIP 109462 / JCM 13490 / 255-15).